The sequence spans 393 residues: MSCFKSKFAGKSYFRRTFHSSIIQFHPQLSILIWHRRYSIIRTYELIANAAYIGTPGKGILAADESTGTIGKRFVSINVENVESNRRALRELLFTTPGALQYISGIILFEETLYQKTASGKLFVDVMKEAGVLPGIKVDKGTVELAGTNGETTTTGLDGLGDRCKKYYEAGARFAKWRAVLKIGNNEPSELAIHENAYGLARYAVICQENGLVPIVEPEILVDGSHDIEKCAYVTERVLAACYKALSDHHVILEGTLLKPNMVTPGSDSGSKVKPEVIAKHTVRALQRTVPAAVPAVVFLSGGQSEEEATVNLNAINQLKGKKPWSLTFSYGRALQQSTLKAWGGKEENVDKAQKAFLARAKANSEATLGGYKGDAQLGEGASESLHVKDYKY.

Arg73 contacts substrate. Cys207 is modified (S-glutathionyl cysteine; transient; alternate). S-nitrosocysteine; transient; alternate is present on Cys207. Glu217 acts as the Proton acceptor in catalysis. The active-site Schiff-base intermediate with dihydroxyacetone-P is the Lys259. Substrate contacts are provided by residues 301–303 and Arg333; that span reads SGG.

This sequence belongs to the class I fructose-bisphosphate aldolase family. Homotetramer. S-glutathionylated at Cys-207. In terms of processing, S-nitrosylated at Cys-207. In terms of tissue distribution, highly expressed in flowers.

The protein localises to the cytoplasm. The protein resides in the cytosol. It catalyses the reaction beta-D-fructose 1,6-bisphosphate = D-glyceraldehyde 3-phosphate + dihydroxyacetone phosphate. The protein operates within carbohydrate degradation; glycolysis; D-glyceraldehyde 3-phosphate and glycerone phosphate from D-glucose: step 4/4. Functionally, fructose-bisphosphate aldolase that plays a key role in glycolysis and gluconeogenesis. The polypeptide is Fructose-bisphosphate aldolase 4, cytosolic (Arabidopsis thaliana (Mouse-ear cress)).